Here is a 157-residue protein sequence, read N- to C-terminus: 2-C-methyl-D-erythritol 2,4-cyclodiphosphate synthase (157 aa).

Residues D8 and H10 each contribute to the a divalent metal cation site. Residues D8–H10 and H34–S35 each bind 4-CDP-2-C-methyl-D-erythritol 2-phosphate. Position 42 (H42) interacts with a divalent metal cation. 4-CDP-2-C-methyl-D-erythritol 2-phosphate-binding positions include D56 to G58, F61 to D65, A100 to L106, T132 to E135, F139, and R142.

Belongs to the IspF family. In terms of assembly, homotrimer. A divalent metal cation is required as a cofactor.

The catalysed reaction is 4-CDP-2-C-methyl-D-erythritol 2-phosphate = 2-C-methyl-D-erythritol 2,4-cyclic diphosphate + CMP. Its pathway is isoprenoid biosynthesis; isopentenyl diphosphate biosynthesis via DXP pathway; isopentenyl diphosphate from 1-deoxy-D-xylulose 5-phosphate: step 4/6. Functionally, involved in the biosynthesis of isopentenyl diphosphate (IPP) and dimethylallyl diphosphate (DMAPP), two major building blocks of isoprenoid compounds. Catalyzes the conversion of 4-diphosphocytidyl-2-C-methyl-D-erythritol 2-phosphate (CDP-ME2P) to 2-C-methyl-D-erythritol 2,4-cyclodiphosphate (ME-CPP) with a corresponding release of cytidine 5-monophosphate (CMP). The polypeptide is 2-C-methyl-D-erythritol 2,4-cyclodiphosphate synthase (Erwinia tasmaniensis (strain DSM 17950 / CFBP 7177 / CIP 109463 / NCPPB 4357 / Et1/99)).